A 120-amino-acid chain; its full sequence is Large ribosomal subunit protein uL18 (120 aa).

It belongs to the universal ribosomal protein uL18 family. In terms of assembly, part of the 50S ribosomal subunit; part of the 5S rRNA/L5/L18/L25 subcomplex. Contacts the 5S and 23S rRNAs.

This is one of the proteins that bind and probably mediate the attachment of the 5S RNA into the large ribosomal subunit, where it forms part of the central protuberance. This Bacillus cytotoxicus (strain DSM 22905 / CIP 110041 / 391-98 / NVH 391-98) protein is Large ribosomal subunit protein uL18.